An 843-amino-acid chain; its full sequence is MSLISAVEDRDIHNIGKTSGGGSRTSSITSSKKSLKHGSKSLRKPKVYQTTGELLSREALYKAKLKYGVYQSPAQSYSIGVSDAHAASDKAANLAHDNQTTVEAYKRMFIDPNATKAASKMGPKVVRNNSITSATSKTSXESQTKRKSKESPGAAASKAYSMTMETTSLSSQTNSRSYSITSASSVLSGASGSFNSTVNPKPKTLNLEKVLVGAEKKAESRIKERWEPEKTNFQYGVKTDEHGNLNQFSFSNEMMNNIMAKVDAPKAQDLQKVKKVSAEKEAKSMKFALGAANAVKDMHPGEDIDKSIALKAQKRETYLSQLTSQQVLTLARANVDRQLDIIEKSDMHRKLFTNMEYNKAAVAVAQSNHQKKTEFHNKINMGGGLFLSPEDITKIASGLISPVLGEVSERAEAQRAMDEEIAERTEAYNKSLNEWETMERSIISNDAKVLTTTANRHQTEKKTSQEKIKASFDALVARMDTKVAERETLLEDTKSKEIEFKKQMQQELKDEKARLDQDLEEWGKKCEQDITEARKEQEELLKPYHDDLANAEAEHKTLVEERDXINAEISRLQDAIVDHKRKISGYGNDLDAQKNRNIREDDKLLELGQTKESLESHLNDDVIILANKAKEQAELSTKEARLKQLEVDSLINERKSELNATXIELKKEKLXLLEAMKDVASARGDDKIDEEKVKKLIGMTSEEYLTQNKSVEKNVEDLPTQLEXIEEGDELKKEEIVGAETKNSGGDGVPVSTAAKEATETSSAVQTKEPEEKISIGNKSSGKEDANDCKSAEHSKEISVSQKAGNNKSLGVSPDSLEHTFSGFSQGSSIEDDQDAISNQEKK.

Residue Ser2 is modified to N-acetylserine. Phosphoserine is present on Ser2. The segment at 13-44 is disordered; the sequence is HNIGKTSGGGSRTSSITSSKKSLKHGSKSLRK. Over residues 33 to 44 the composition is skewed to basic residues; sequence KSLKHGSKSLRK. Phosphoserine is present on residues Ser88 and Ser130. Positions 120–176 are disordered; the sequence is KMGPKVVRNNSITSATSKTSXESQTKRKSKESPGAAASKAYSMTMETTSLSSQTNSR. Composition is skewed to polar residues over residues 127–142 and 163–176; these read RNNS…SXES and TMET…TNSR. A phosphoserine mark is found at Ser182, Ser401, Ser584, and Ser710. The interval 708–843 is disordered; sequence NKSVEKNVED…QDAISNQEKK (136 aa). Thr720 bears the Phosphothreonine mark. Low complexity predominate over residues 752–764; it reads STAAKEATETSSA. Residues Ser763 and Ser775 each carry the phosphoserine modification. The span at 781-797 shows a compositional bias: basic and acidic residues; sequence SGKEDANDCKSAEHSKE. Positions 798 to 810 are enriched in polar residues; sequence ISVSQKAGNNKSL. Phosphoserine occurs at positions 816, 828, 829, and 838.

Belongs to the EIS1 family.

The protein localises to the cytoplasmic granule. Its subcellular location is the cell membrane. In terms of biological role, required for normal formation of eisosomes, large cytoplasmic protein assemblies that localize to specialized domains on plasma membrane and mark the site of endocytosis. The chain is Eisosome protein 1 (EIS1) from Saccharomyces cerevisiae (strain VIN 13) (Baker's yeast).